Here is a 67-residue protein sequence, read N- to C-terminus: Small ribosomal subunit protein eS27 (67 aa).

The Zn(2+) site is built by Cys-22, Cys-25, Cys-41, and Cys-44. The segment at 22-44 (CPDCGNEQVTFSHAAMVVRCLVC) adopts a C4-type zinc-finger fold.

Belongs to the eukaryotic ribosomal protein eS27 family. Part of the 30S ribosomal subunit. It depends on Zn(2+) as a cofactor.

This chain is Small ribosomal subunit protein eS27, found in Pyrobaculum calidifontis (strain DSM 21063 / JCM 11548 / VA1).